A 180-amino-acid polypeptide reads, in one-letter code: NADH-quinone oxidoreductase subunit I (180 aa).

4Fe-4S ferredoxin-type domains follow at residues L50–A80 and E90–D119. Positions 60, 63, 66, 70, 99, 102, 105, and 109 each coordinate [4Fe-4S] cluster.

Belongs to the complex I 23 kDa subunit family. NDH-1 is composed of 14 different subunits. Subunits NuoA, H, J, K, L, M, N constitute the membrane sector of the complex. The cofactor is [4Fe-4S] cluster.

It localises to the cell inner membrane. It carries out the reaction a quinone + NADH + 5 H(+)(in) = a quinol + NAD(+) + 4 H(+)(out). NDH-1 shuttles electrons from NADH, via FMN and iron-sulfur (Fe-S) centers, to quinones in the respiratory chain. The immediate electron acceptor for the enzyme in this species is believed to be ubiquinone. Couples the redox reaction to proton translocation (for every two electrons transferred, four hydrogen ions are translocated across the cytoplasmic membrane), and thus conserves the redox energy in a proton gradient. The protein is NADH-quinone oxidoreductase subunit I of Acinetobacter baylyi (strain ATCC 33305 / BD413 / ADP1).